The primary structure comprises 303 residues: Recombination-associated protein RdgC (303 aa).

The protein belongs to the RdgC family.

It is found in the cytoplasm. Its subcellular location is the nucleoid. May be involved in recombination. In Serratia proteamaculans (strain 568), this protein is Recombination-associated protein RdgC.